Reading from the N-terminus, the 209-residue chain is Pyrrolidone-carboxylate peptidase (209 aa).

Catalysis depends on residues Glu79, Cys142, and His164.

This sequence belongs to the peptidase C15 family. In terms of assembly, homotetramer.

It localises to the cytoplasm. The enzyme catalyses Release of an N-terminal pyroglutamyl group from a polypeptide, the second amino acid generally not being Pro.. Its function is as follows. Removes 5-oxoproline from various penultimate amino acid residues except L-proline. This Saccharolobus islandicus (strain Y.N.15.51 / Yellowstone #2) (Sulfolobus islandicus) protein is Pyrrolidone-carboxylate peptidase.